A 158-amino-acid chain; its full sequence is Small ribosomal subunit protein bS6 (158 aa).

The span at 92–149 (RVDEHEEGPSAMMRKADRDRERDDRGPREGGFRGDREGRGDRDGFRGDRGPRRPREDA) shows a compositional bias: basic and acidic residues. The tract at residues 92-158 (RVDEHEEGPS…ADAPAAAVEE (67 aa)) is disordered.

This sequence belongs to the bacterial ribosomal protein bS6 family.

Its function is as follows. Binds together with bS18 to 16S ribosomal RNA. This chain is Small ribosomal subunit protein bS6, found in Rhodopseudomonas palustris (strain ATCC BAA-98 / CGA009).